Here is a 146-residue protein sequence, read N- to C-terminus: Large ribosomal subunit protein uL15 (146 aa).

Positions 1 to 65 (MSDIQLNTLK…GQMPLQRRLP (65 aa)) are disordered. Over residues 24–34 (RGIGSGLGKTA) the composition is skewed to gly residues.

It belongs to the universal ribosomal protein uL15 family. In terms of assembly, part of the 50S ribosomal subunit.

In terms of biological role, binds to the 23S rRNA. The protein is Large ribosomal subunit protein uL15 of Bordetella petrii (strain ATCC BAA-461 / DSM 12804 / CCUG 43448).